Reading from the N-terminus, the 378-residue chain is MGQSKKLNKQPSSLSPLVQLAGIRKCFDGKEVISQLDLTINNGEFLTLLGPSGCGKTTVLRLIAGLETVDSGRIMLDNEDITHVPAENRYVNTVFQSYALFPHMTVFENVAFGLRMQKTPAAEITPRVMEALRMVQLETFAQRKPHQLSGGQQQRVAIARAVVNKPRLLLLDESLSALDYKLRKQMQNELKALQRKLGITFVFVTHDQEEALTMSDRIVVMRDGRIEQDGTPREIYEEPKNLFVAGFIGEINMFNATVIERLDEQRVRANVEGRECNIYVNFAVEPGQKLHVLLRPEDLRVEEINDDNHAEGLIGYVRERNYKGMTLESVVELENGKMVMVSEFFNEDDPDFDHSLDQKMAINWVESWEVVLADEEHK.

Residues V18 to I248 enclose the ABC transporter domain. Position 50–57 (G50–T57) interacts with ATP.

The protein belongs to the ABC transporter superfamily. Spermidine/putrescine importer (TC 3.A.1.11.1) family. The complex is composed of two ATP-binding proteins (PotA), two transmembrane proteins (PotB and PotC) and a solute-binding protein (PotD).

It is found in the cell inner membrane. The enzyme catalyses ATP + H2O + polyamine-[polyamine-binding protein]Side 1 = ADP + phosphate + polyamineSide 2 + [polyamine-binding protein]Side 1.. Its function is as follows. Part of the ABC transporter complex PotABCD involved in spermidine/putrescine import. Responsible for energy coupling to the transport system. In Shigella dysenteriae serotype 1 (strain Sd197), this protein is Spermidine/putrescine import ATP-binding protein PotA.